The primary structure comprises 319 residues: Transcription factor VBP (319 aa).

Low complexity-rich tracts occupy residues 1-31 and 143-158; these read MPGRAAHQEAAAAGGAAAEPTAAGGSAGAVA and ASASTGSPVSSSSTAV. 2 disordered regions span residues 1–35 and 139–186; these read MPGRAAHQEAAAAGGAAAEPTAAGGSAGAVAQQPE and EKEP…DPDC. The segment covering 159-180 has biased composition (polar residues); that stretch reads YQQSEAASSTESPPQNERNTPS. The 64-residue stretch at 243–306 folds into the bZIP domain; sequence DEKYWTRRKK…GRCKNIVSKY (64 aa). The basic motif stretch occupies residues 245 to 265; sequence KYWTRRKKNNVAAKRSRDARR. Residues 266–273 are leucine-zipper; the sequence is LKENQITI.

This sequence belongs to the bZIP family. PAR subfamily. As to quaternary structure, binds DNA as a homodimer or a heterodimer. Exists as a stable dimer in the absence of DNA. In terms of tissue distribution, isoform 1 and isoform 3 are expressed in a variety of somatic tissues, including liver, heart, intestine, stomach and kidney. Both isoforms are also expressed in hepatoma (LMH) cells and in embryonic fibroblast cell lines. Isoform 2 and isoform 4 are expressed in adult heart and intestine.

The protein localises to the nucleus. Transcription factor that binds to and transactivates the vitellogenin II (VTG2) promoter. Binds to the palindromic sequence 5'-GTTTACATAAAC-3'. The polypeptide is Transcription factor VBP (TEF) (Gallus gallus (Chicken)).